Reading from the N-terminus, the 341-residue chain is UDP-3-O-acylglucosamine N-acyltransferase (341 aa).

Residue His239 is the Proton acceptor of the active site.

The protein belongs to the transferase hexapeptide repeat family. LpxD subfamily. As to quaternary structure, homotrimer.

The catalysed reaction is a UDP-3-O-[(3R)-3-hydroxyacyl]-alpha-D-glucosamine + a (3R)-hydroxyacyl-[ACP] = a UDP-2-N,3-O-bis[(3R)-3-hydroxyacyl]-alpha-D-glucosamine + holo-[ACP] + H(+). The protein operates within bacterial outer membrane biogenesis; LPS lipid A biosynthesis. Its function is as follows. Catalyzes the N-acylation of UDP-3-O-acylglucosamine using 3-hydroxyacyl-ACP as the acyl donor. Is involved in the biosynthesis of lipid A, a phosphorylated glycolipid that anchors the lipopolysaccharide to the outer membrane of the cell. This chain is UDP-3-O-acylglucosamine N-acyltransferase, found in Shewanella sp. (strain MR-7).